The primary structure comprises 243 residues: Small ribosomal subunit protein uS3 (243 aa).

A2 carries the post-translational modification N-acetylalanine. Phosphoserine; by PKC/PRKCD is present on S6. Residues 21 to 92 form the KH type-2 domain; sequence LNEFLTRELA…SVELYAEKVA (72 aa). A Phosphoserine modification is found at S35. T42 bears the Phosphothreonine; by MAPK mark. An N6-acetyllysine modification is found at K62. R64, R65, and R67 each carry asymmetric dimethylarginine; by PRMT1. Residue T70 is modified to Phosphothreonine; by PKB. K90 is covalently cross-linked (Glycyl lysine isopeptide (Lys-Gly) (interchain with G-Cter in ubiquitin)). S104 is modified (phosphoserine). At K132 the chain carries N6-succinyllysine. K202 is covalently cross-linked (Glycyl lysine isopeptide (Lys-Gly) (interchain with G-Cter in ubiquitin)). Residue S209 is modified to Phosphoserine; by IKKB. A Glycyl lysine isopeptide (Lys-Gly) (interchain with G-Cter in SUMO2); alternate cross-link involves residue K214. K214 is covalently cross-linked (Glycyl lysine isopeptide (Lys-Gly) (interchain with G-Cter in ubiquitin); alternate). Residues 214–243 are disordered; the sequence is KDEILPTTPISEQKGGKPEPPAMPQPVPTA. The residue at position 220 (T220) is a Phosphothreonine. T221 is subject to Phosphothreonine; by CDK1 and PKC/PRKCD. S224 bears the Phosphoserine mark. A Glycyl lysine isopeptide (Lys-Gly) (interchain with G-Cter in SUMO2) cross-link involves residue K230. The segment covering 231–243 has biased composition (pro residues); sequence PEPPAMPQPVPTA. T242 is subject to Phosphothreonine.

Belongs to the universal ribosomal protein uS3 family. Component of the 40S small ribosomal subunit. Identified in a IGF2BP1-dependent mRNP granule complex containing untranslated mRNAs. Interacts with HNRPD. Interacts with PRMT1; the interaction methylates RPS3. Interacts with SUMO1; the interaction sumoylates RPS3. Interacts with UBC9. Interacts with CDK1; the interaction phosphorylates RPS3. Interacts with PRKCD; the interaction phosphorylates RPS3. Interacts with PKB/AKT; the interaction phosphorylates RPS3. Interacts with E2F1; the interaction occurs in the absence of nerve growth factor and increases transcription of pro-apoptotic proteins BCL2L11/BIM and HRK/Dp5. Interacts with the base excision repair proteins APEX1 and OGG1; interaction with OGG1 increases OGG1 N-glycosylase activity. Interacts with UNG; the interaction increases the uracil excision activity of UNG1. Interacts with HSP90; the interaction prevents the ubiquitination and proteasome-dependent degradation of RPS3 and is suppressed by increased ROS levels. Interacts with TOM70; the interaction promotes translocation of RPS3 to the mitochondrion. Interacts (via N-terminus) with RELA (via N-terminus); the interaction enhances the DNA-binding activity of the NF-kappa-B p65-p50 complex. Interacts with NFKBIA; the interaction is direct and may bridge the interaction between RPS3 and RELA. Interacts with IKKB; the interaction phosphorylates RPS3 and enhances its translocation to the nucleus. Interacts (via KH domain) with MDM2 and TP53. Interacts with TRADD. Interacts with CRY1. In terms of processing, methylation by PRMT1 is required for import into the nucleolus and for ribosome assembly. Post-translationally, sumoylation by SUMO1 enhances protein stability through increased resistance to proteolysis. Sumoylation occurs at one or more of the three consensus sites, Lys-18, Lys-214 and Lys-230. Phosphorylation at Thr-221 by CDK1 occurs mainly in G2/M phase. Phosphorylation by PRKCD occurs on a non-ribosomal-associated form which results in translocation of RPS3 to the nucleus and enhances its endonuclease activity. Phosphorylated on Ser-209 by IKKB in response to activation of the NF-kappa-B p65-p50 complex which enhances the association of RPS3 with importin-alpha and mediates the nuclear translocation of RPS3. Phosphorylation by MAPK is required for translocation to the nucleus following exposure of cells to DNA damaging agents such as hydrogen peroxide. Phosphorylation by PKB/AKT mediates RPS3 nuclear translocation, enhances RPS3 endonuclease activity and suppresses RPS3-induced neuronal apoptosis. In terms of processing, ubiquitinated; ubiquitination is prevented by interaction with HSP90 which stabilizes the protein. Monoubiquitinated at Lys-214 by RNF10 and ZNF598 when a ribosome has stalled during translation of poly(A) sequences, leading to preclude synthesis of a long poly-lysine tail and initiate the ribosome quality control (RQC) pathway to degrade the potentially detrimental aberrant nascent polypeptide. Deubiquitinated at Lys-214 by USP10, preventing degradation by the proteasome and promoting 40S ribosome subunit recycling following ribosome dissociation. Post-translationally, ufmylated by UFL1.

Its subcellular location is the cytoplasm. The protein localises to the nucleus. The protein resides in the nucleolus. It is found in the mitochondrion inner membrane. It localises to the cytoskeleton. Its subcellular location is the spindle. The catalysed reaction is 2'-deoxyribonucleotide-(2'-deoxyribose 5'-phosphate)-2'-deoxyribonucleotide-DNA = a 3'-end 2'-deoxyribonucleotide-(2,3-dehydro-2,3-deoxyribose 5'-phosphate)-DNA + a 5'-end 5'-phospho-2'-deoxyribonucleoside-DNA + H(+). Its function is as follows. Component of the small ribosomal subunit. The ribosome is a large ribonucleoprotein complex responsible for the synthesis of proteins in the cell. Has endonuclease activity and plays a role in repair of damaged DNA. Cleaves phosphodiester bonds of DNAs containing altered bases with broad specificity and cleaves supercoiled DNA more efficiently than relaxed DNA. Displays high binding affinity for 7,8-dihydro-8-oxoguanine (8-oxoG), a common DNA lesion caused by reactive oxygen species (ROS). Has also been shown to bind with similar affinity to intact and damaged DNA. Stimulates the N-glycosylase activity of the base excision protein OGG1. Enhances the uracil excision activity of UNG1. Also stimulates the cleavage of the phosphodiester backbone by APEX1. When located in the mitochondrion, reduces cellular ROS levels and mitochondrial DNA damage. Has also been shown to negatively regulate DNA repair in cells exposed to hydrogen peroxide. Plays a role in regulating transcription as part of the NF-kappa-B p65-p50 complex where it binds to the RELA/p65 subunit, enhances binding of the complex to DNA and promotes transcription of target genes. Represses its own translation by binding to its cognate mRNA. Binds to and protects TP53/p53 from MDM2-mediated ubiquitination. Involved in spindle formation and chromosome movement during mitosis by regulating microtubule polymerization. Involved in induction of apoptosis through its role in activation of CASP8. Induces neuronal apoptosis by interacting with the E2F1 transcription factor and acting synergistically with it to up-regulate pro-apoptotic proteins BCL2L11/BIM and HRK/Dp5. Interacts with TRADD following exposure to UV radiation and induces apoptosis by caspase-dependent JNK activation. The protein is Small ribosomal subunit protein uS3 (RPS3) of Bos taurus (Bovine).